Consider the following 447-residue polypeptide: Exodeoxyribonuclease 7 large subunit (447 aa).

Belongs to the XseA family. As to quaternary structure, heterooligomer composed of large and small subunits.

It localises to the cytoplasm. It carries out the reaction Exonucleolytic cleavage in either 5'- to 3'- or 3'- to 5'-direction to yield nucleoside 5'-phosphates.. Bidirectionally degrades single-stranded DNA into large acid-insoluble oligonucleotides, which are then degraded further into small acid-soluble oligonucleotides. This is Exodeoxyribonuclease 7 large subunit from Thioalkalivibrio sulfidiphilus (strain HL-EbGR7).